The following is a 457-amino-acid chain: Cytochrome b-c1 complex subunit 1, mitochondrial (457 aa).

The transit peptide at 1 to 26 directs the protein to the mitochondrion; that stretch reads MLRTVTSKTVSNQFKRSLATAVATPK.

It belongs to the peptidase M16 family. UQCRC1/QCR1 subfamily. In terms of assembly, component of the ubiquinol-cytochrome c oxidoreductase (cytochrome b-c1 complex, complex III, CIII), a multisubunit enzyme composed of 10 subunits. The complex is composed of 3 respiratory subunits cytochrome b (COB), cytochrome c1 (CYT1) and Rieske protein (RIP1), 2 core protein subunits COR1 and QCR2, and 5 low-molecular weight protein subunits QCR6, QCR7, QCR8, QCR9 and QCR10. The complex exists as an obligatory dimer and forms supercomplexes (SCs) in the inner mitochondrial membrane with a monomer or a dimer of cytochrome c oxidase (complex IV, CIV), resulting in 2 different assemblies (supercomplexes III(2)IV and III(2)IV(2)). COR1 interacts with COX5A at the CIII-CIV interface.

It is found in the mitochondrion inner membrane. Its function is as follows. Component of the ubiquinol-cytochrome c oxidoreductase, a multisubunit transmembrane complex that is part of the mitochondrial electron transport chain which drives oxidative phosphorylation. The respiratory chain contains 3 multisubunit complexes succinate dehydrogenase (complex II, CII), ubiquinol-cytochrome c oxidoreductase (cytochrome b-c1 complex, complex III, CIII) and cytochrome c oxidase (complex IV, CIV), that cooperate to transfer electrons derived from NADH and succinate to molecular oxygen, creating an electrochemical gradient over the inner membrane that drives transmembrane transport and the ATP synthase. The cytochrome b-c1 complex catalyzes electron transfer from ubiquinol to cytochrome c, linking this redox reaction to translocation of protons across the mitochondrial inner membrane, with protons being carried across the membrane as hydrogens on the quinol. In the process called Q cycle, 2 protons are consumed from the matrix, 4 protons are released into the intermembrane space and 2 electrons are passed to cytochrome c. This is Cytochrome b-c1 complex subunit 1, mitochondrial (COR1) from Saccharomyces cerevisiae (strain ATCC 204508 / S288c) (Baker's yeast).